Consider the following 92-residue polypeptide: Small ribosomal subunit protein uS19 (92 aa).

This sequence belongs to the universal ribosomal protein uS19 family.

Its function is as follows. Protein S19 forms a complex with S13 that binds strongly to the 16S ribosomal RNA. The sequence is that of Small ribosomal subunit protein uS19 from Methylobacterium radiotolerans (strain ATCC 27329 / DSM 1819 / JCM 2831 / NBRC 15690 / NCIMB 10815 / 0-1).